A 626-amino-acid polypeptide reads, in one-letter code: Myelin-associated glycoprotein (626 aa).

Residues 1–19 (MIFLTALPLFWIMISASRG) form the signal peptide. Positions 20 to 325 (GHWGAWMPSS…RTVGLSVMYA (306 aa)) are interaction with RTN4R and RTN4RL2. Residues 20-516 (GHWGAWMPSS…HRLMWAKIGP (497 aa)) lie on the Extracellular side of the membrane. Residues 22–120 (WGAWMPSSIS…LGGKYYFRGD (99 aa)) enclose the Ig-like V-type domain. Intrachain disulfides connect Cys37-Cys165, Cys42-Cys100, and Cys159-Cys217. A ganglioside GT1b (d18:1(4E)) is bound at residue 65-67 (YPK). Asn99 is a glycosylation site (N-linked (GlcNAc...) asparagine). Asn106 carries N-linked (GlcNAc...) asparagine; partial glycosylation. Residues Arg118 and 124–128 (YNQYT) contribute to the a ganglioside GT1b (d18:1(4E)) site. Ig-like C2-type domains lie at 139–237 (NTPN…MDVK), 241–325 (VIVE…VMYA), 327–412 (WKPT…VEFA), and 413–508 (PVLL…GAHR). N-linked (GlcNAc...) asparagine glycosylation is found at Asn223 and Asn246. Cys261 and Cys305 are disulfide-bonded. Asn315 carries N-linked (GlcNAc...) asparagine glycosylation. A disulfide bond links Cys347 and Cys392. The N-linked (GlcNAc...) asparagine glycan is linked to Asn406. Intrachain disulfides connect Cys421-Cys430 and Cys432-Cys488. Asn450 and Asn454 each carry an N-linked (GlcNAc...) asparagine glycan. The helical transmembrane segment at 517–536 (VGAVVAFAILIAIVCYITQT) threads the bilayer. A lipid anchor (S-palmitoyl cysteine) is attached at Cys531. Residues 537 to 626 (RRKKNVTESP…LAEYAEIRVK (90 aa)) are Cytoplasmic-facing. Ser545, Ser547, and Ser549 each carry phosphoserine. Positions 577 to 626 (LGSERRLLGLRGEPPELDLSYSHSDLGKRPTKDSYTLTEELAEYAEIRVK) are required for normal axon myelination in the central nervous system. Positions 582–608 (RLLGLRGEPPELDLSYSHSDLGKRPTK) are disordered.

Belongs to the immunoglobulin superfamily. SIGLEC (sialic acid binding Ig-like lectin) family. In terms of assembly, monomer and homodimer. Interacts (via the first three N-terminal Ig-like domains) with RTN4R and RTN4RL2. Interacts with RTN4R. Interacts with isoform 2 of BSG. N-glycosylated. In terms of processing, phosphorylated on tyrosine residues. Post-translationally, ubiquitinated, leading to proteasomal degradation. In terms of tissue distribution, both isoform 1 and isoform 2 are detected in myelinated structures in the central and peripheral nervous system, in periaxonal myelin and at Schmidt-Lanterman incisures. Detected in optic nerve, in oligodendroglia and in periaxonal myelin sheaths. Detected in compact myelin (at protein level). Both isoform 1 and isoform 2 are detected in the central and peripheral nervous system.

It localises to the cell membrane. The protein localises to the membrane raft. Functionally, adhesion molecule that mediates interactions between myelinating cells and neurons by binding to neuronal sialic acid-containing gangliosides and to the glycoproteins RTN4R and RTN4RL2. Not required for initial myelination, but seems to play a role in the maintenance of normal axon myelination. Protects motoneurons against apoptosis, also after injury; protection against apoptosis is probably mediated via interaction with neuronal RTN4R and RTN4RL2. Required to prevent degeneration of myelinated axons in adults; this probably depends on binding to gangliosides on the axon cell membrane. Negative regulator of neurite outgrowth; in dorsal root ganglion neurons the inhibition is mediated primarily via binding to neuronal RTN4R or RTN4RL2 and to a lesser degree via binding to neuronal gangliosides. In cerebellar granule cells the inhibition is mediated primarily via binding to neuronal gangliosides. In sensory neurons, inhibition of neurite extension depends only partially on RTN4R, RTN4RL2 and gangliosides. Inhibits axon longitudinal growth. Inhibits axon outgrowth by binding to RTN4R. Preferentially binds to alpha-2,3-linked sialic acid. Binds ganglioside Gt1b. This chain is Myelin-associated glycoprotein (MAG), found in Homo sapiens (Human).